The following is a 79-amino-acid chain: Panulirin (79 aa).

A signal peptide spans 1–22 (MKNKAVLMLMALFLVAVTQVHG). A propeptide spanning residues 23–26 (DPEP) is cleaved from the precursor. Intrachain disulfides connect cysteine 33–cysteine 63, cysteine 40–cysteine 56, and cysteine 46–cysteine 64. A propeptide spanning residues 75–79 (QLLAA) is cleaved from the precursor.

As to quaternary structure, monomer. Contains 3 disulfide bonds. In terms of tissue distribution, expressed in hemocytes (at protein level).

Functionally, involved in the melanization cascade in response to lipopolysaccharide (LPS). In vitro, reversibly and competitively inhibits trypsin (Ki=8.6 nM) but not serine proteases chymotrypsin, elastase, subtilisin, thrombin and plasmin, cysteine peptidase papain or metallopeptidase carboxypeptidase A. The polypeptide is Panulirin (Panulirus argus (Caribbean spiny lobster)).